The primary structure comprises 482 residues: Catalase (482 aa).

The segment covering 1–11 (MNAMTNKTLTT) has biased composition (polar residues). Residues 1–21 (MNAMTNKTLTTAAGAPVADNN) are disordered. Catalysis depends on residues His-57 and Asn-130. Tyr-340 lines the heme pocket.

Belongs to the catalase family. In terms of assembly, homodimer. Heme serves as cofactor.

It carries out the reaction 2 H2O2 = O2 + 2 H2O. In terms of biological role, decomposes hydrogen peroxide into water and oxygen; serves to protect cells from the toxic effects of hydrogen peroxide. The sequence is that of Catalase (katA) from Bordetella bronchiseptica (strain ATCC BAA-588 / NCTC 13252 / RB50) (Alcaligenes bronchisepticus).